The sequence spans 180 residues: Aspartate 1-decarboxylase (180 aa).

Ser-24 acts as the Schiff-base intermediate with substrate; via pyruvic acid in catalysis. Position 24 is a pyruvic acid (Ser) (Ser-24). Thr-56 is a binding site for substrate. Tyr-57 (proton donor) is an active-site residue. Substrate is bound at residue 72–74; sequence GAA.

It belongs to the PanD family. As to quaternary structure, heterooctamer of four alpha and four beta subunits. Pyruvate serves as cofactor. Post-translationally, is synthesized initially as an inactive proenzyme, which is activated by self-cleavage at a specific serine bond to produce a beta-subunit with a hydroxyl group at its C-terminus and an alpha-subunit with a pyruvoyl group at its N-terminus.

Its subcellular location is the cytoplasm. The catalysed reaction is L-aspartate + H(+) = beta-alanine + CO2. Its pathway is cofactor biosynthesis; (R)-pantothenate biosynthesis; beta-alanine from L-aspartate: step 1/1. Catalyzes the pyruvoyl-dependent decarboxylation of aspartate to produce beta-alanine. This Paramagnetospirillum magneticum (strain ATCC 700264 / AMB-1) (Magnetospirillum magneticum) protein is Aspartate 1-decarboxylase.